Reading from the N-terminus, the 114-residue chain is Large ribosomal subunit protein bL19 (114 aa).

The protein belongs to the bacterial ribosomal protein bL19 family.

This protein is located at the 30S-50S ribosomal subunit interface and may play a role in the structure and function of the aminoacyl-tRNA binding site. This Desulfatibacillum aliphaticivorans protein is Large ribosomal subunit protein bL19.